Consider the following 232-residue polypeptide: Putative homeobox protein NANOG2 (232 aa).

Positions 1–10 are enriched in basic and acidic residues; that stretch reads MDLPIEDSHD. Residues 1–39 form a disordered region; sequence MDLPIEDSHDSSTSPKGKQPTTAEKSATKKEDKVPVKKQ. Residues 11–25 are compositionally biased toward polar residues; it reads SSTSPKGKQPTTAEK. The segment covering 26–35 has biased composition (basic and acidic residues); that stretch reads SATKKEDKVP. 8 repeat units span residues 123 to 127, 128 to 132, 133 to 137, 143 to 147, 148 to 152, 153 to 157, 158 to 162, and 163 to 167. Residues 123–167 form an 8 X repeats starting with a Trp in each unit region; that stretch reads WSNQTWNNSIWSNETQNIQSWSNHSWNTQTWCTQSWNNQAWNSPF. Residues 123 to 167 form a sufficient for transactivation activity region; that stretch reads WSNQTWNNSIWSNETQNIQSWSNHSWNTQTWCTQSWNNQAWNSPF. The interval 168–232 is sufficient for strong transactivation activity; it reads YNCGEESLQS…YSTNMQPEDV (65 aa).

This sequence belongs to the Nanog homeobox family.

Its subcellular location is the nucleus. In terms of biological role, probable transcriptional regulator. The chain is Putative homeobox protein NANOG2 (NANOGP1) from Pan troglodytes (Chimpanzee).